The chain runs to 339 residues: Mycothiol acetyltransferase (339 aa).

2 N-acetyltransferase domains span residues 8 to 174 (YEQL…QGLT) and 176 to 339 (LTYP…GELN). Glu-39 is a binding site for 1D-myo-inositol 2-(L-cysteinylamino)-2-deoxy-alpha-D-glucopyranoside. An acetyl-CoA-binding site is contributed by 85-87 (LAV). The 1D-myo-inositol 2-(L-cysteinylamino)-2-deoxy-alpha-D-glucopyranoside site is built by Glu-207, Lys-254, and Glu-270. 274–276 (VCL) contacts acetyl-CoA. Tyr-308 is a 1D-myo-inositol 2-(L-cysteinylamino)-2-deoxy-alpha-D-glucopyranoside binding site.

The protein belongs to the acetyltransferase family. MshD subfamily. As to quaternary structure, monomer.

The catalysed reaction is 1D-myo-inositol 2-(L-cysteinylamino)-2-deoxy-alpha-D-glucopyranoside + acetyl-CoA = mycothiol + CoA + H(+). Functionally, catalyzes the transfer of acetyl from acetyl-CoA to desacetylmycothiol (Cys-GlcN-Ins) to form mycothiol. In Corynebacterium urealyticum (strain ATCC 43042 / DSM 7109), this protein is Mycothiol acetyltransferase.